Reading from the N-terminus, the 355-residue chain is Syntaxin-5 (355 aa).

At 1–333 (MIPRKRYGSK…KYFQSVTSNR (333 aa)) the chain is on the cytoplasmic side. Residues 245 to 247 (IDM) carry the IxM motif; signal for cargo packaging into COPII-coated vesicles motif. One can recognise a t-SNARE coiled-coil homology domain in the interval 263–325 (DSYIQSRADT…EAAHSEILKY (63 aa)). Residues 287-318 (FQQLAHMVKEQEETIQRIDENVLGAQLDVEAA) adopt a coiled-coil conformation. The helical; Anchor for type IV membrane protein transmembrane segment at 334-354 (WLMVKIFLILIVFFIIFVVFL) threads the bilayer. Residue Ala-355 is a topological domain, vesicular.

This sequence belongs to the syntaxin family. As to quaternary structure, part of a ternary complex containing STX5A, NSFL1C and VCP. Part of a unique SNARE complex composed of the Golgi SNAREs GOSR1, GOSR2, YKT6 and VTI1A. Component of a SNARE complex consisting of STX5, YKT6, GOSR1 and BET1L. Interacts with BET1L. Interacts with BET1. Interacts with COG4. Interacts with GM130/GOLGA2. Interacts (via IxM motif) with SEC24C and SEC24D; mediates STX5 packaging into COPII-coated vesicles. Interacts with VLDLR; this interaction mediates VLDLR translocation from the endoplasmic reticulum to the plasma membrane.

The protein localises to the endoplasmic reticulum-Golgi intermediate compartment membrane. It localises to the golgi apparatus membrane. Mediates endoplasmic reticulum to Golgi transport. Together with p115/USO1 and GM130/GOLGA2, involved in vesicle tethering and fusion at the cis-Golgi membrane to maintain the stacked and inter-connected structure of the Golgi apparatus. In terms of biological role, required for Golgi to endoplasmic reticulum retrogade transport, and for intra-Golgi transport. In Mus musculus (Mouse), this protein is Syntaxin-5 (Stx5).